The sequence spans 148 residues: Cytochrome c-type biogenesis protein CcmE (148 aa).

The Cytoplasmic segment spans residues 1–7 (MKPRSKR). Residues 8 to 28 (LLLVAGAVALLVGAVALVLNA) form a helical; Signal-anchor for type II membrane protein membrane-spanning segment. At 29–148 (FQQNLVFFHT…AQKAAQTVQQ (120 aa)) the chain is on the periplasmic side. Residues His-123 and Tyr-127 each coordinate heme.

This sequence belongs to the CcmE/CycJ family.

The protein localises to the cell inner membrane. In terms of biological role, heme chaperone required for the biogenesis of c-type cytochromes. Transiently binds heme delivered by CcmC and transfers the heme to apo-cytochromes in a process facilitated by CcmF and CcmH. This is Cytochrome c-type biogenesis protein CcmE from Aromatoleum aromaticum (strain DSM 19018 / LMG 30748 / EbN1) (Azoarcus sp. (strain EbN1)).